Consider the following 173-residue polypeptide: bZIP transcription factor 44 (173 aa).

Residues 1 to 65 are disordered; that stretch reads MNNKTEMGSS…SRMRKQKHLD (65 aa). A compositionally biased stretch (low complexity) spans 8-22; sequence GSSTSGNCSSVSTTG. The span at 30–41 shows a compositional bias: basic and acidic residues; the sequence is SDLRQRDLIDER. The 64-residue stretch at 39-102 folds into the bZIP domain; it reads DERKRKRKQS…VTIEAENDIL (64 aa). Residues 41 to 62 form a basic motif region; sequence RKRKRKQSNRESARRSRMRKQK. A leucine-zipper region spans residues 67–81; the sequence is LTAQVTHLRKENAQI.

As to quaternary structure, forms heterodimers with BZIP1, BZIP9, BZIP10, BZIP25 and BZIP63. Expressed in the micropylar endosperm and radicle tip in early germinating seeds.

The protein resides in the nucleus. Transcription factor that binds to the DNA G-box motif 5'-CACGTG-3' of MAN7 promoter. Involved in the positive regulation of seed germination through MAN7 gene activation. MAN7 is required for both, loosening of the micropylar endosperm, and rupture of the seed coat in germinating seeds. The protein is bZIP transcription factor 44 of Arabidopsis thaliana (Mouse-ear cress).